A 536-amino-acid polypeptide reads, in one-letter code: Caspase recruitment domain-containing protein 9 (536 aa).

S2 carries the post-translational modification Phosphoserine. Residues D3, C10, and H73 each coordinate Zn(2+). A CARD domain is found at 6-98 (NDDECWSTLE…QLYRKVTGKE (93 aa)). The linker stretch occupies residues 99–116 (PARVFSMIIDASGESGLT). The stretch at 117–272 (QLLMTEVMKL…ELQVSVQEGK (156 aa)) forms a coiled coil. K125 participates in a covalent cross-link: Glycyl lysine isopeptide (Lys-Gly) (interchain with G-Cter in ubiquitin). A Phosphothreonine; by PKC/PRKCD modification is found at T231. S277 is subject to Phosphoserine. Residues 303-415 (SLRKDLRQAE…LLAAEGRLKQ (113 aa)) adopt a coiled-coil conformation. Phosphoserine occurs at positions 424, 425, 431, 451, 461, 483, and 498. The interval 425 to 451 (SDLEDSSPRNSQELSLPQDLEEDAQLS) is disordered. Residues 476-536 (LTHGMGPSSS…GSDNTDTEGS (61 aa)) form a disordered region. Positions 487–502 (PPEKERRRLKESFENY) are enriched in basic and acidic residues. Residues T531 and T533 each carry the phosphothreonine; by CK2 modification.

In terms of assembly, monomer. Homodimer; homodimerization is mediated by the CARD domain which forms an extensive interaction with the adjacent linker and coiled-coil regions; leads to an autoinhibited state. Homomultimer; polymerizes following activation, forming a nucleating helical template that seeds BCL10-filament formation via a CARD-CARD interaction. Interacts (via CARD domain) with BCL10 (via CARD domain); interaction takes place following CARD9 activation and polymerization, leading to the formation of a filamentous CBM complex assembly. Component of a CBM complex (CARD9-BCL10, MALT1), composed of CARD9, BCL10 and MALT1. Interacts with RASGRF1. Interacts with NOD2 (via NACHT domain); interaction is direct. Interacts with RIPK2. Interacts with VHL; without leading to protein degradation. In terms of processing, phosphorylated at Thr-231 by PRKCD downstream of C-type lectin receptors activation: phosphorylation promotes interaction with BCL10, followed by activation of NF-kappa-B and MAP kinase p38 pathways. Phosphorylated at Thr-531 and Thr-531 by CK2 following interaction with VHL, leading to inhibit the ability to activate NF-kappa-B. Post-translationally, ubiquitinated at Lys-125 via 'Lys-27'-linked ubiquitin by TRIM62 downstream of C-type lectin receptors activation; leading to CARD9 activation, followed by activation of NF-kappa-B and MAP kinase p38 pathways. Deubiquitinated at Lys-125 by USP15, inhibiting CARD9. In terms of tissue distribution, specifically expressed in myeloid cells. Not expressed in non-lymphoid organs.

It is found in the cytoplasm. Its activity is regulated as follows. Maintained in an autoinhibited state via homodimerization in which the CARD domain forms an extensive interaction with the adjacent linker and coiled-coil regions. Activation downstream of C-type lectin receptors, by phosphorylation by PRKCD and/or ubiquitination by TRIM62, triggers disruption of the CARD domain-coiled coil interface, CARD9 homooligomerization and BCL10 recruitment, followed by activation of NF-kappa-B and MAP kinase p38 pathways. Zinc-binding inhibits activation by stabilizing the CARD ground-state conformation and restricting its capacity to form BCL10-nucleating filaments. Adapter protein that plays a key role in innate immune response against fungi by forming signaling complexes downstream of C-type lectin receptors. CARD9-mediated signals are essential for antifungal immunity against a subset of fungi from the phylum Ascomycota. Transduces signals in myeloid cells downstream of C-type lectin receptors CLEC7A (dectin-1), CLEC6A (dectin-2) and CLEC4E (Mincle), which detect pathogen-associated molecular pattern metabolites (PAMPs), such as fungal carbohydrates, and trigger CARD9 activation. Upon activation, CARD9 homooligomerizes to form a nucleating helical template that recruits BCL10 via CARD-CARD interaction, thereby promoting polymerization of BCL10 and subsequent recruitment of MALT1: this leads to activation of NF-kappa-B and MAP kinase p38 (MAPK11, MAPK12, MAPK13 and/or MAPK14) pathways which stimulate expression of genes encoding pro-inflammatory cytokines and chemokines. CARD9 signaling in antigen-presenting cells links innate sensing of fungi to the activation of adaptive immunity and provides a cytokine milieu that induces the development and subsequent of interleukin 17-producing T helper (Th17) cells. Also involved in activation of myeloid cells via classical ITAM-associated receptors and TLR: required for TLR-mediated activation of MAPK, while it is not required for TLR-induced activation of NF-kappa-B. CARD9 can also be engaged independently of BCL10: forms a complex with RASGRF1 downstream of C-type lectin receptors, which recruits and activates HRAS, leading to ERK activation and the production of cytokines. Acts as an important regulator of the intestinal commensal fungi (mycobiota) component of the gut microbiota. Plays an essential role in antifungal immunity against dissemination of gut fungi: acts by promoting induction of antifungal IgG antibodies response in CX3CR1(+) macrophages to confer protection against disseminated C.albicans or C.auris infection. Also mediates immunity against other pathogens, such as certain bacteria, viruses and parasites; CARD9 signaling is however redundant with other innate immune responses. In response to L.monocytogenes infection, required for the production of inflammatory cytokines activated by intracellular peptidoglycan: acts by connecting NOD2 recognition of peptidoglycan to downstream activation of MAP kinases (MAPK) without activating NF-kappa-B. This Mus musculus (Mouse) protein is Caspase recruitment domain-containing protein 9.